We begin with the raw amino-acid sequence, 235 residues long: Protein CIST1 (235 aa).

An N-terminal signal peptide occupies residues 1-31 (MASSQPPLPPPPPPLLLLALLLLLKVSDTSS). Composition is skewed to low complexity over residues 28-61 (DTSS…SSPT) and 76-110 (STSH…SQPE). The interval 28–159 (DTSSSVSTAT…TGPPSVSLAT (132 aa)) is disordered. The Extracellular portion of the chain corresponds to 32–184 (SVSTATSTAS…GVPRLHRNPG (153 aa)). Asn-45 carries an N-linked (GlcNAc...) asparagine glycan. Residues 114–136 (HPSSGSPSSEHTVTSPSLGSVSL) are compositionally biased toward polar residues. A helical membrane pass occupies residues 185 to 205 (VVVAVCLLVSALLIGGAIMAV). Residues 206 to 235 (RRCHNGVSEFQKLDEGLVSRRSSSAHHTLP) are Cytoplasmic-facing.

As to expression, highly expressed in large intestine, small intestine, rumen, and kidney tissues.

It localises to the membrane. This Bos taurus (Bovine) protein is Protein CIST1 (CIST1).